A 351-amino-acid polypeptide reads, in one-letter code: Riboflavin-binding protein RibY (351 aa).

The signal sequence occupies residues 1–19; sequence MMKLRVLTLGILIILLITA. Cysteine 20 is lipidated: N-palmitoyl cysteine. Residue cysteine 20 is the site of S-diacylglycerol cysteine attachment.

Belongs to the NMT1 family. The complex is likely composed of an ATP-binding protein, a transmembrane protein (RibX) and a solute-binding protein (RibY).

The protein resides in the cell membrane. Part of an ABC transporter complex that transports riboflavin into the cell. Binds riboflavin. The polypeptide is Riboflavin-binding protein RibY (Chloroflexus aurantiacus (strain ATCC 29366 / DSM 635 / J-10-fl)).